The chain runs to 245 residues: Octopine transport system permease protein OccM (245 aa).

The next 5 membrane-spanning stretches (helical) occupy residues 12–32 (FVALLSGIPLALQLAVFSVAL), 57–77 (FYIFAFRGTPLLVQIYIIYYG), 96–116 (AYWCAMAALALNTAAYTAEIM), 163–183 (ILMVKSTSLASTITIMEITGI), and 204–224 (IYLILNFIVARLFTLLEWALW). The region spanning 19 to 216 (IPLALQLAVF…ILNFIVARLF (198 aa)) is the ABC transmembrane type-1 domain.

This sequence belongs to the binding-protein-dependent transport system permease family. HisMQ subfamily.

The protein resides in the cell inner membrane. In terms of biological role, component of the octopine active transport system probably consisting of four subunits: Q, M, P and T. The sequence is that of Octopine transport system permease protein OccM (occM) from Rhizobium radiobacter (Agrobacterium tumefaciens).